The sequence spans 265 residues: Basic leucine zipper 6 (265 aa).

Disordered regions lie at residues 1 to 24 and 77 to 139; these read MAQL…SAGG and LMSM…RDPK. The span at 85–97 shows a compositional bias: low complexity; it reads GGSSAPGSDNGGS. A compositionally biased stretch (polar residues) spans 122 to 132; the sequence is TQEQAAATSPT. The region spanning 137 to 189 is the bZIP domain; sequence DPKRVKRILANRQSAQRSRVRKLQYISELERSVTTLQNEVSVLSPRVAFLDQQ. Residues 139 to 158 are basic motif; sequence KRVKRILANRQSAQRSRVRK. A leucine-zipper region spans residues 165-186; that stretch reads LERSVTTLQNEVSVLSPRVAFL. Residues 239–265 are disordered; it reads LSGGLAADHAHVHGGPPPVRAEKELMS.

As to expression, expressed in roots, shoots and panicles.

Its subcellular location is the nucleus. Functionally, transcription regulator. This chain is Basic leucine zipper 6 (BZIP06), found in Oryza sativa subsp. japonica (Rice).